Here is a 154-residue protein sequence, read N- to C-terminus: Large ribosomal subunit protein uL13 (154 aa).

This sequence belongs to the universal ribosomal protein uL13 family. In terms of assembly, part of the 50S ribosomal subunit.

Its function is as follows. This protein is one of the early assembly proteins of the 50S ribosomal subunit, although it is not seen to bind rRNA by itself. It is important during the early stages of 50S assembly. This is Large ribosomal subunit protein uL13 from Agrobacterium fabrum (strain C58 / ATCC 33970) (Agrobacterium tumefaciens (strain C58)).